The following is a 340-amino-acid chain: MAAHIEFRGVTKSFGSGDTPAALDGLDLTIDRGEIFCIIGYSGAGKSTLVRLINALEHPSSGSVVVDGRDLTALRERELCGVRAGIGMIFQQFNLFRSRTVFGNIAYPLKIAGWPADKRKQRVAELLAFVGLTEKAWAYPEQLSGGQKQRVGIARALATNPGILLADEATSSLDPETTADVLALLKRVNAELGVTIVVITHEMEVVRSIADRVAVLEAGRVIETGTVFEVFSNPQTTTARRFVGTVLRNQPGAADVERLRGKHSGRIVSARIQDDGRLGSVLSDAVGRHCVRFEIVYGGISALQGRSFGSLTLELIGEPADVDALIADLRGATEIEEVAA.

The region spanning 5–243 (IEFRGVTKSF…PQTTTARRFV (239 aa)) is the ABC transporter domain. ATP is bound at residue 40 to 47 (GYSGAGKS).

It belongs to the ABC transporter superfamily. Methionine importer (TC 3.A.1.24) family. As to quaternary structure, the complex is composed of two ATP-binding proteins (MetN), two transmembrane proteins (MetI) and a solute-binding protein (MetQ).

Its subcellular location is the cell membrane. It catalyses the reaction L-methionine(out) + ATP + H2O = L-methionine(in) + ADP + phosphate + H(+). It carries out the reaction D-methionine(out) + ATP + H2O = D-methionine(in) + ADP + phosphate + H(+). Functionally, part of the ABC transporter complex MetNIQ involved in methionine import. Responsible for energy coupling to the transport system. The chain is Methionine import ATP-binding protein MetN from Leifsonia xyli subsp. xyli (strain CTCB07).